Here is a 201-residue protein sequence, read N- to C-terminus: Pyridoxal 5'-phosphate synthase subunit PdxT (201 aa).

51 to 53 (GES) provides a ligand contact to L-glutamine. The active-site Nucleophile is the C83. Residues R112 and 141-142 (IR) each bind L-glutamine. Active-site charge relay system residues include H182 and E184.

It belongs to the glutaminase PdxT/SNO family. In terms of assembly, in the presence of PdxS, forms a dodecamer of heterodimers. Only shows activity in the heterodimer.

It carries out the reaction aldehydo-D-ribose 5-phosphate + D-glyceraldehyde 3-phosphate + L-glutamine = pyridoxal 5'-phosphate + L-glutamate + phosphate + 3 H2O + H(+). It catalyses the reaction L-glutamine + H2O = L-glutamate + NH4(+). It functions in the pathway cofactor biosynthesis; pyridoxal 5'-phosphate biosynthesis. In terms of biological role, catalyzes the hydrolysis of glutamine to glutamate and ammonia as part of the biosynthesis of pyridoxal 5'-phosphate. The resulting ammonia molecule is channeled to the active site of PdxS. This chain is Pyridoxal 5'-phosphate synthase subunit PdxT, found in Thermobifida fusca (strain YX).